Reading from the N-terminus, the 264-residue chain is Na(+)-translocating NADH-quinone reductase subunit E (264 aa).

6 helical membrane-spanning segments follow: residues 11–31 (VFGI…NFLG), 50–70 (MSVA…HTFI), 90–110 (FLEL…LELL), 123–143 (GIFL…LFGI), 149–169 (FIPM…AIVL), and 189–209 (MGIS…LTGI).

The protein belongs to the NqrDE/RnfAE family. Composed of six subunits; NqrA, NqrB, NqrC, NqrD, NqrE and NqrF.

The protein localises to the cell inner membrane. It catalyses the reaction a ubiquinone + n Na(+)(in) + NADH + H(+) = a ubiquinol + n Na(+)(out) + NAD(+). NQR complex catalyzes the reduction of ubiquinone-1 to ubiquinol by two successive reactions, coupled with the transport of Na(+) ions from the cytoplasm to the periplasm. NqrA to NqrE are probably involved in the second step, the conversion of ubisemiquinone to ubiquinol. The chain is Na(+)-translocating NADH-quinone reductase subunit E from Chlamydia caviae (strain ATCC VR-813 / DSM 19441 / 03DC25 / GPIC) (Chlamydophila caviae).